Reading from the N-terminus, the 637-residue chain is Sodium-dependent phosphate transport protein 2A (637 aa).

Residues 1-103 lie on the Cytoplasmic side of the membrane; the sequence is MMSYSERLGG…LAQVGTKLLK (103 aa). Serine 14 and serine 34 each carry phosphoserine. A helical membrane pass occupies residues 104–125; the sequence is VPLMLAFLYLFVCSLDVLSSAF. The Extracellular portion of the chain corresponds to 126 to 145; sequence QLAGGKVAGDIFKDNAILSN. The chain crosses the membrane as a helical span at residues 146 to 163; the sequence is PVAGLVVGILVTVLVQSS. The Cytoplasmic portion of the chain corresponds to 164 to 165; the sequence is ST. A helical transmembrane segment spans residues 166-185; sequence STSIIVSMVSSGLLEVSSAI. The Extracellular segment spans residues 186–345; it reads PIIMGSNIGT…HIFVDTGLPD (160 aa). 2 cysteine pairs are disulfide-bonded: cysteine 225-cysteine 520 and cysteine 306-cysteine 334. N-linked (GlcNAc...) asparagine glycans are attached at residues asparagine 298 and asparagine 328. The chain crosses the membrane as a helical span at residues 346–368; it reads LAVGLILLAGSLVVLCTCLILLV. At 369–410 the chain is on the cytoplasmic side; that stretch reads KMLNSLLKGQVMSSRRSSTQTDFPAPFTWVTGYFAMVVGASM. Residues 411-434 form a helical membrane-spanning segment; that stretch reads TFVVQSSSVFTSAITPLIGLGVIS. The Extracellular portion of the chain corresponds to 435 to 464; sequence IERAYPLTLGSNIGTTTTAILAALASPREK. A helical transmembrane segment spans residues 465 to 485; sequence LSSSFQIALCHFFFNISGILL. Topologically, residues 486–511 are cytoplasmic; the sequence is WYPLPCTRLPIRMAKALGKRTAKYRW. Threonine 506 carries the phosphothreonine; by PKC modification. A helical membrane pass occupies residues 512–532; it reads FAVLYLLVCFLLLPSLVFGIS. Residues 533-537 lie on the Extracellular side of the membrane; the sequence is MAGWQ. A helical membrane pass occupies residues 538–559; sequence AMVGVGTPFGALLAFVVLVNVL. The Cytoplasmic segment spans residues 560–637; it reads QSRSPGHLPK…LPAHHNATRL (78 aa). Phosphoserine is present on serine 605. Threonine 621 is subject to Phosphothreonine. Serine 623 is subject to Phosphoserine.

The protein belongs to the SLC34A transporter family. Interacts via its C-terminal region with NHERF4. Interacts with NHERF1. Interacts with TMEM174; regulates SLC34A1 internalization by PTH and FGF23. In terms of tissue distribution, kidney.

Its subcellular location is the apical cell membrane. It is found in the cell membrane. The enzyme catalyses 3 Na(+)(out) + phosphate(out) = 3 Na(+)(in) + phosphate(in). Its function is as follows. Involved in actively transporting phosphate into cells via Na(+) cotransport in the renal brush border membrane. The cotransport has a Na(+):Pi stoichiometry of 3:1 and is electrogenic. The chain is Sodium-dependent phosphate transport protein 2A from Mus musculus (Mouse).